Reading from the N-terminus, the 620-residue chain is MDSHTLLQALIYLGSAALIVPIAVRLGLGSVLGYLIAGCIIGPWGLRLVTDAESILHFAEIGVVLMLFVIGLELDPQRLWKLRASVFGGGALQMVVCGGLIGLFCMFLGLRWQVAELIGMTLALSSTAIAMQAMNERNLTVSQVGRSAFAVLLFQDIAAIPLVAMIPLLAASGASTTLGAFALSALKVAGALALVVLLGRYVTRPALRFVARSGLREVFSAVALFLVFGFGLLLEEVGLSMAMGAFLAGVLLASSEYRHALESDIEPFKGLLLGLFFIGVGMSIDFGTLVENPLRILLLLAGFLAIKIVMLWLVARPLGVPAKQRRWFAVLLGQGSKFAFVVFGAAQMADVLEPEWAKALTLAVALSMAATPIFLVLLTRMEKTATGEAREADEIDEEQPRVIVAGFGRFGQIAGRLLLSSGVKMVVLDHDPDHIETLRKFGMKVFYGDATRMDLLESAGAAKAEVLINAIDDPQTNLQLSELVKSHFPHLQIIARARDVDHYIRLRQAGVAMPERETFEGALKSGRQALEALGLGRYEARERADLFRHFNTRMVEEMAKGENDPLSRAAAYKRTSAMLSEIITEDREHLSLIQRHGWQGTAEGKHSGEAADEPEVKPSI.

12 consecutive transmembrane segments (helical) span residues 4–24 (HTLL…PIAV), 26–46 (LGLG…PWGL), 54–74 (SILH…GLEL), 90–110 (GALQ…FLGL), 114–134 (VAEL…MQAM), 149–169 (FAVL…IPLL), 178–198 (LGAF…VVLL), 218–238 (VFSA…EEVG), 270–290 (GLLL…GTLV), 294–314 (LRIL…LWLV), 327–347 (WFAV…GAAQ), and 359–379 (ALTL…VLLT). The RCK N-terminal domain occupies 399 to 518 (QPRVIVAGFG…AGVAMPERET (120 aa)). Positions 599–620 (QGTAEGKHSGEAADEPEVKPSI) are disordered.

This sequence belongs to the monovalent cation:proton antiporter 2 (CPA2) transporter (TC 2.A.37) family. KefC subfamily. As to quaternary structure, homodimer. Interacts with the regulatory subunit KefF.

It localises to the cell inner membrane. Pore-forming subunit of a potassium efflux system that confers protection against electrophiles. Catalyzes K(+)/H(+) antiport. The sequence is that of Glutathione-regulated potassium-efflux system protein KefC from Salmonella choleraesuis (strain SC-B67).